A 442-amino-acid chain; its full sequence is Methionine aminopeptidase 2 (442 aa).

Positions M1–R81 are disordered. A compositionally biased stretch (basic residues) spans P56–A72. H196 contributes to the substrate binding site. Positions 216, 227, and 296 each coordinate a divalent metal cation. H304 is a substrate binding site. Residues E329 and E423 each contribute to the a divalent metal cation site.

The protein belongs to the peptidase M24A family. Methionine aminopeptidase eukaryotic type 2 subfamily. The cofactor is Co(2+). Zn(2+) is required as a cofactor. Mn(2+) serves as cofactor. It depends on Fe(2+) as a cofactor.

The protein localises to the cytoplasm. It catalyses the reaction Release of N-terminal amino acids, preferentially methionine, from peptides and arylamides.. Its function is as follows. Cotranslationally removes the N-terminal methionine from nascent proteins. The N-terminal methionine is often cleaved when the second residue in the primary sequence is small and uncharged (Met-Ala-, Cys, Gly, Pro, Ser, Thr, or Val). This chain is Methionine aminopeptidase 2, found in Verticillium alfalfae (strain VaMs.102 / ATCC MYA-4576 / FGSC 10136) (Verticillium wilt of alfalfa).